The following is a 224-amino-acid chain: Probable C-&gt;U-editing enzyme APOBEC-2 (224 aa).

The disordered stretch occupies residues 1–25 (MAQKEEAAAATEAASQNGEDLENLD). Residues Glu-60 and His-98 each contribute to the Zn(2+) site. Residues 64-169 (GRNKTFLCYV…LEIQDALKKL (106 aa)) form the CMP/dCMP-type deaminase domain. Glu-100 functions as the Proton donor in the catalytic mechanism. Zn(2+)-binding residues include Cys-128 and Cys-131.

This sequence belongs to the cytidine and deoxycytidylate deaminase family. In terms of assembly, homotetramer. Zn(2+) serves as cofactor.

The catalysed reaction is cytidine(6666) in apoB mRNA + H2O + H(+) = uridine(6666) in apoB mRNA + NH4(+). Its function is as follows. Probable C to U editing enzyme whose physiological substrate is not yet known. Does not display detectable apoB mRNA editing. Has a low intrinsic cytidine deaminase activity. May play a role in the epigenetic regulation of gene expression through the process of active DNA demethylation. The protein is Probable C-&gt;U-editing enzyme APOBEC-2 (APOBEC2) of Pongo pygmaeus (Bornean orangutan).